The primary structure comprises 401 residues: 2-amino-3-carboxymuconate-6-semialdehyde decarboxylase (401 aa).

Residues His-18 and His-20 each contribute to the Zn(2+) site. Arg-59 provides a ligand contact to substrate. 2 residues coordinate Zn(2+): His-234 and Asp-352.

This sequence belongs to the metallo-dependent hydrolases superfamily. ACMSD family. As to quaternary structure, monomer.

It carries out the reaction 2-amino-3-carboxymuconate 6-semialdehyde + H(+) = 2-aminomuconate 6-semialdehyde + CO2. It functions in the pathway secondary metabolite metabolism; quinolate metabolism. Functionally, converts alpha-amino-beta-carboxymuconate-epsilon-semialdehyde (ACMS) to alpha-aminomuconate semialdehyde (AMS). This is 2-amino-3-carboxymuconate-6-semialdehyde decarboxylase from Caenorhabditis elegans.